The following is a 570-amino-acid chain: Sulfite reductase [NADPH] hemoprotein beta-component (570 aa).

[4Fe-4S] cluster-binding residues include C434, C440, C479, and C483. Position 483 (C483) interacts with siroheme.

The protein belongs to the nitrite and sulfite reductase 4Fe-4S domain family. As to quaternary structure, alpha(8)-beta(8). The alpha component is a flavoprotein, the beta component is a hemoprotein. Requires siroheme as cofactor. [4Fe-4S] cluster is required as a cofactor.

It carries out the reaction hydrogen sulfide + 3 NADP(+) + 3 H2O = sulfite + 3 NADPH + 4 H(+). Its pathway is sulfur metabolism; hydrogen sulfide biosynthesis; hydrogen sulfide from sulfite (NADPH route): step 1/1. Its function is as follows. Component of the sulfite reductase complex that catalyzes the 6-electron reduction of sulfite to sulfide. This is one of several activities required for the biosynthesis of L-cysteine from sulfate. This chain is Sulfite reductase [NADPH] hemoprotein beta-component, found in Shigella boydii serotype 4 (strain Sb227).